The sequence spans 397 residues: uncharacterized protein (397 aa).

Positions 368–391 (TTKPGLHQPTQKRPTQTTSKPYIN) are disordered. Residues 375-388 (QPTQKRPTQTTSKP) are compositionally biased toward polar residues.

This is an uncharacterized protein from Acanthamoeba polyphaga mimivirus (APMV).